Reading from the N-terminus, the 157-residue chain is Transcription elongation factor GreA (157 aa).

This sequence belongs to the GreA/GreB family.

In terms of biological role, necessary for efficient RNA polymerase transcription elongation past template-encoded arresting sites. The arresting sites in DNA have the property of trapping a certain fraction of elongating RNA polymerases that pass through, resulting in locked ternary complexes. Cleavage of the nascent transcript by cleavage factors such as GreA or GreB allows the resumption of elongation from the new 3'terminus. GreA releases sequences of 2 to 3 nucleotides. The sequence is that of Transcription elongation factor GreA from Chelativorans sp. (strain BNC1).